Reading from the N-terminus, the 396-residue chain is 1-deoxy-D-xylulose 5-phosphate reductoisomerase (396 aa).

Residues T13, G14, S15, I16, and N127 each contribute to the NADPH site. A 1-deoxy-D-xylulose 5-phosphate-binding site is contributed by K128. E129 contributes to the NADPH binding site. D153 is a binding site for Mn(2+). S154, E155, S184, and H207 together coordinate 1-deoxy-D-xylulose 5-phosphate. E155 is a Mn(2+) binding site. Residue G213 coordinates NADPH. Positions 220, 225, 226, and 229 each coordinate 1-deoxy-D-xylulose 5-phosphate. E229 provides a ligand contact to Mn(2+).

The protein belongs to the DXR family. The cofactor is Mg(2+). It depends on Mn(2+) as a cofactor.

It carries out the reaction 2-C-methyl-D-erythritol 4-phosphate + NADP(+) = 1-deoxy-D-xylulose 5-phosphate + NADPH + H(+). It functions in the pathway isoprenoid biosynthesis; isopentenyl diphosphate biosynthesis via DXP pathway; isopentenyl diphosphate from 1-deoxy-D-xylulose 5-phosphate: step 1/6. Functionally, catalyzes the NADPH-dependent rearrangement and reduction of 1-deoxy-D-xylulose-5-phosphate (DXP) to 2-C-methyl-D-erythritol 4-phosphate (MEP). The chain is 1-deoxy-D-xylulose 5-phosphate reductoisomerase from Pseudomonas savastanoi pv. phaseolicola (strain 1448A / Race 6) (Pseudomonas syringae pv. phaseolicola (strain 1448A / Race 6)).